We begin with the raw amino-acid sequence, 213 residues long: Imidazole glycerol phosphate synthase subunit HisH (213 aa).

Residues 4–213 form the Glutamine amidotransferase type-1 domain; sequence SIAIVDYGMG…LYRNFVHWKP (210 aa). The active-site Nucleophile is Cys83. Catalysis depends on residues His193 and Glu195.

Heterodimer of HisH and HisF.

The protein localises to the cytoplasm. It carries out the reaction 5-[(5-phospho-1-deoxy-D-ribulos-1-ylimino)methylamino]-1-(5-phospho-beta-D-ribosyl)imidazole-4-carboxamide + L-glutamine = D-erythro-1-(imidazol-4-yl)glycerol 3-phosphate + 5-amino-1-(5-phospho-beta-D-ribosyl)imidazole-4-carboxamide + L-glutamate + H(+). It catalyses the reaction L-glutamine + H2O = L-glutamate + NH4(+). It functions in the pathway amino-acid biosynthesis; L-histidine biosynthesis; L-histidine from 5-phospho-alpha-D-ribose 1-diphosphate: step 5/9. Functionally, IGPS catalyzes the conversion of PRFAR and glutamine to IGP, AICAR and glutamate. The HisH subunit catalyzes the hydrolysis of glutamine to glutamate and ammonia as part of the synthesis of IGP and AICAR. The resulting ammonia molecule is channeled to the active site of HisF. In Burkholderia lata (strain ATCC 17760 / DSM 23089 / LMG 22485 / NCIMB 9086 / R18194 / 383), this protein is Imidazole glycerol phosphate synthase subunit HisH.